Reading from the N-terminus, the 391-residue chain is Phosphoglycerate kinase (391 aa).

Substrate is bound by residues 21-23 (DLN), Arg36, 59-62 (HLGR), Arg113, and Arg146. Residues Lys197, Glu319, and 345-348 (GGDT) contribute to the ATP site.

The protein belongs to the phosphoglycerate kinase family. As to quaternary structure, monomer.

It is found in the cytoplasm. The catalysed reaction is (2R)-3-phosphoglycerate + ATP = (2R)-3-phospho-glyceroyl phosphate + ADP. It functions in the pathway carbohydrate degradation; glycolysis; pyruvate from D-glyceraldehyde 3-phosphate: step 2/5. The protein is Phosphoglycerate kinase of Xanthomonas campestris pv. campestris (strain 8004).